The following is a 610-amino-acid chain: DNA mismatch repair protein MutL (610 aa).

The protein belongs to the DNA mismatch repair MutL/HexB family.

Its function is as follows. This protein is involved in the repair of mismatches in DNA. It is required for dam-dependent methyl-directed DNA mismatch repair. May act as a 'molecular matchmaker', a protein that promotes the formation of a stable complex between two or more DNA-binding proteins in an ATP-dependent manner without itself being part of a final effector complex. The sequence is that of DNA mismatch repair protein MutL from Rickettsia rickettsii (strain Sheila Smith).